Here is a 205-residue protein sequence, read N- to C-terminus: ATP phosphoribosyltransferase (205 aa).

It belongs to the ATP phosphoribosyltransferase family. Short subfamily. Heteromultimer composed of HisG and HisZ subunits.

The protein localises to the cytoplasm. It carries out the reaction 1-(5-phospho-beta-D-ribosyl)-ATP + diphosphate = 5-phospho-alpha-D-ribose 1-diphosphate + ATP. The protein operates within amino-acid biosynthesis; L-histidine biosynthesis; L-histidine from 5-phospho-alpha-D-ribose 1-diphosphate: step 1/9. Catalyzes the condensation of ATP and 5-phosphoribose 1-diphosphate to form N'-(5'-phosphoribosyl)-ATP (PR-ATP). Has a crucial role in the pathway because the rate of histidine biosynthesis seems to be controlled primarily by regulation of HisG enzymatic activity. The protein is ATP phosphoribosyltransferase of Ruthia magnifica subsp. Calyptogena magnifica.